Here is a 63-residue protein sequence, read N- to C-terminus: Large ribosomal subunit protein uL29 (63 aa).

It belongs to the universal ribosomal protein uL29 family.

The polypeptide is Large ribosomal subunit protein uL29 (Aeromonas salmonicida (strain A449)).